A 472-amino-acid polypeptide reads, in one-letter code: Trigger factor (472 aa).

In terms of domain architecture, PPIase FKBP-type spans 174 to 261; sequence GDIAVLGFKG…LKDLKTRELP (88 aa). The tract at residues 430–472 is disordered; sequence ENSTLTEQAPAADDADDAEKPAAKKKPAAKKKTPAKSKTDAEA. The segment covering 452-464 has biased composition (basic residues); the sequence is AKKKPAAKKKTPA.

This sequence belongs to the FKBP-type PPIase family. Tig subfamily.

The protein localises to the cytoplasm. It carries out the reaction [protein]-peptidylproline (omega=180) = [protein]-peptidylproline (omega=0). Involved in protein export. Acts as a chaperone by maintaining the newly synthesized protein in an open conformation. Functions as a peptidyl-prolyl cis-trans isomerase. This is Trigger factor from Parasynechococcus marenigrum (strain WH8102).